Reading from the N-terminus, the 207-residue chain is Small ribosomal subunit protein uS4 (207 aa).

The segment at 31 to 55 (KCKLDSKPGQHGRTSGARTSDYGTQ) is disordered. The segment covering 42-53 (GRTSGARTSDYG) has biased composition (polar residues). Positions 97-160 (SRLDNVVYRM…KKQARIVEAL (64 aa)) constitute an S4 RNA-binding domain.

The protein belongs to the universal ribosomal protein uS4 family. As to quaternary structure, part of the 30S ribosomal subunit. Contacts protein S5. The interaction surface between S4 and S5 is involved in control of translational fidelity.

One of the primary rRNA binding proteins, it binds directly to 16S rRNA where it nucleates assembly of the body of the 30S subunit. Its function is as follows. With S5 and S12 plays an important role in translational accuracy. This is Small ribosomal subunit protein uS4 from Burkholderia orbicola (strain MC0-3).